A 187-amino-acid polypeptide reads, in one-letter code: Large ribosomal subunit protein uL5 (187 aa).

This sequence belongs to the universal ribosomal protein uL5 family. In terms of assembly, part of the 50S ribosomal subunit; part of the 5S rRNA/L5/L18/L25 subcomplex. Contacts the 5S rRNA and the P site tRNA. Forms a bridge to the 30S subunit in the 70S ribosome.

Its function is as follows. This is one of the proteins that bind and probably mediate the attachment of the 5S RNA into the large ribosomal subunit, where it forms part of the central protuberance. In the 70S ribosome it contacts protein S13 of the 30S subunit (bridge B1b), connecting the 2 subunits; this bridge is implicated in subunit movement. Contacts the P site tRNA; the 5S rRNA and some of its associated proteins might help stabilize positioning of ribosome-bound tRNAs. In Roseobacter denitrificans (strain ATCC 33942 / OCh 114) (Erythrobacter sp. (strain OCh 114)), this protein is Large ribosomal subunit protein uL5.